The sequence spans 784 residues: Ubiquitin carboxyl-terminal hydrolase 1 (784 aa).

Disordered stretches follow at residues 1–21 and 34–56; these read MPGVIPSESNGLSRGSPSKKN and KRALDFTDSQENEEKTSEYRGSE. The span at 7-16 shows a compositional bias: polar residues; that stretch reads SESNGLSRGS. 2 positions are modified to phosphoserine: serine 16 and serine 42. Residues 45–56 show a composition bias toward basic and acidic residues; it reads NEEKTSEYRGSE. Serine 67 bears the Phosphoserine mark. A USP domain is found at 81-784; sequence VGLNNLGNTC…TPYLLFYKKL (704 aa). The active-site Nucleophile is cysteine 90. Basic and acidic residues-rich tracts occupy residues 233 to 243 and 252 to 264; these read VEEQSLQKEET and DSMRNTEDVKEQL. 2 disordered regions span residues 233–342 and 362–414; these read VEEQ…INWL and TTNQ…KSGN. Residue serine 474 is modified to Phosphoserine. The active-site Proton acceptor is histidine 592. Residues 684–725 are disordered; that stretch reads NPDKVVGTPFTDNRNSETNDTTNGTHESDRNKESSDQTGVNM. Polar residues predominate over residues 693-708; sequence FTDNRNSETNDTTNGT. A compositionally biased stretch (basic and acidic residues) spans 709 to 718; it reads HESDRNKESS. A Phosphoserine modification is found at serine 767.

Belongs to the peptidase C19 family. In terms of assembly, interacts with FANCD2 and PCNA. Interacts with WDR48. Interacts with ATAD5; the interaction regulates USP1-mediated PCNA deubiquitination. Autocatalytic cleavage of USP1 following UV irradiation inactivates it, leading to an increase in ubiquitinated PCNA, recruitment of POLH and translesion synthesis. Post-translationally, ubiquitinated by the CRL2(KLHDC2) complex following autocatalytic cleavage, leading to its degradation: the CRL2(KLHDC2) complex recognizes the diglycine (Gly-Gly) at the C-terminus.

It localises to the nucleus. It catalyses the reaction Thiol-dependent hydrolysis of ester, thioester, amide, peptide and isopeptide bonds formed by the C-terminal Gly of ubiquitin (a 76-residue protein attached to proteins as an intracellular targeting signal).. Negative regulator of DNA damage repair which specifically deubiquitinates monoubiquitinated FANCD2. Also involved in PCNA-mediated translesion synthesis (TLS) by deubiquitinating monoubiquitinated PCNA. Has almost no deubiquitinating activity by itself and requires the interaction with WDR48 to have a high activity. This is Ubiquitin carboxyl-terminal hydrolase 1 from Mus musculus (Mouse).